We begin with the raw amino-acid sequence, 376 residues long: Queuine tRNA-ribosyltransferase (376 aa).

Aspartate 92 (proton acceptor) is an active-site residue. Substrate-binding positions include 92-96 (DSGGF), aspartate 146, glutamine 190, and glycine 217. Residues 248–254 (GVGRPED) are RNA binding. The Nucleophile role is filled by aspartate 267. The interval 272 to 276 (TRNAR) is RNA binding; important for wobble base 34 recognition. The Zn(2+) site is built by cysteine 305, cysteine 307, cysteine 310, and histidine 337.

Belongs to the queuine tRNA-ribosyltransferase family. Homodimer. Within each dimer, one monomer is responsible for RNA recognition and catalysis, while the other monomer binds to the replacement base PreQ1. Zn(2+) is required as a cofactor.

It carries out the reaction 7-aminomethyl-7-carbaguanine + guanosine(34) in tRNA = 7-aminomethyl-7-carbaguanosine(34) in tRNA + guanine. Its pathway is tRNA modification; tRNA-queuosine biosynthesis. Functionally, catalyzes the base-exchange of a guanine (G) residue with the queuine precursor 7-aminomethyl-7-deazaguanine (PreQ1) at position 34 (anticodon wobble position) in tRNAs with GU(N) anticodons (tRNA-Asp, -Asn, -His and -Tyr). Catalysis occurs through a double-displacement mechanism. The nucleophile active site attacks the C1' of nucleotide 34 to detach the guanine base from the RNA, forming a covalent enzyme-RNA intermediate. The proton acceptor active site deprotonates the incoming PreQ1, allowing a nucleophilic attack on the C1' of the ribose to form the product. After dissociation, two additional enzymatic reactions on the tRNA convert PreQ1 to queuine (Q), resulting in the hypermodified nucleoside queuosine (7-(((4,5-cis-dihydroxy-2-cyclopenten-1-yl)amino)methyl)-7-deazaguanosine). This Stenotrophomonas maltophilia (strain K279a) protein is Queuine tRNA-ribosyltransferase.